The primary structure comprises 245 residues: Uridylate kinase (245 aa).

Position 20-23 (20-23) interacts with ATP; the sequence is KVSG. UMP is bound at residue Gly62. ATP is bound by residues Gly63 and Arg67. UMP-binding positions include Asp81 and 142 to 149; that span reads IGSPFFTT. ATP is bound by residues Thr169, Gln170, Tyr175, and Asp178.

Belongs to the UMP kinase family. Homohexamer.

The protein resides in the cytoplasm. It carries out the reaction UMP + ATP = UDP + ADP. Its pathway is pyrimidine metabolism; CTP biosynthesis via de novo pathway; UDP from UMP (UMPK route): step 1/1. Inhibited by UTP. Catalyzes the reversible phosphorylation of UMP to UDP. The sequence is that of Uridylate kinase from Anaplasma marginale (strain St. Maries).